Reading from the N-terminus, the 585-residue chain is Squalene epoxidase 2, mitochondrial (585 aa).

Residues 1-45 constitute a mitochondrion transit peptide; that stretch reads MKPFVIRNLPRFQSTLRSSLLYTNHRPSSRFSLSTRRFTTGATYI. A helical transmembrane segment spans residues 70 to 90; sequence AKIALDQFIASLFTFLLLYIL. FAD contacts are provided by residues 132–133, 152–153, Arg160, Arg231, Val247, Asp409, and Met422; these read VA and ER. A run of 3 helical transmembrane segments spans residues 493 to 513, 520 to 540, and 545 to 565; these read FDYLSLGGVFSSGPVALLSGL, LVLHFFAVAIYAVCRLMLPFP, and FWLGARIISSASSIIFPIIKA.

Belongs to the squalene monooxygenase family. It depends on FAD as a cofactor. Expressed mainly in inflorescences. Detected in seedlings, leaves, stems, and siliques.

Its subcellular location is the mitochondrion membrane. The catalysed reaction is squalene + reduced [NADPH--hemoprotein reductase] + O2 = (S)-2,3-epoxysqualene + oxidized [NADPH--hemoprotein reductase] + H2O + H(+). Its pathway is terpene metabolism; lanosterol biosynthesis; lanosterol from farnesyl diphosphate: step 2/3. In terms of biological role, catalyzes the stereospecific oxidation of squalene to (S)-2,3-epoxysqualene, and is considered to be a rate-limiting enzyme in steroid biosynthesis. Produces primarily oxidosqualene. This chain is Squalene epoxidase 2, mitochondrial (SQE2), found in Arabidopsis thaliana (Mouse-ear cress).